Here is a 485-residue protein sequence, read N- to C-terminus: NADH-quinone oxidoreductase subunit N (485 aa).

14 helical membrane-spanning segments follow: residues 8-28 (LIALLPLLIVGLTVVVVMLSI), 35-55 (FLNATLSVIGLNAALVSLWFV), 71-91 (GFAMLYTGLVLLASLATCTFA), 105-125 (FYLLVLIAALGGILLANANHL), 127-147 (SLFLGIELISLPLFGLVGYAF), 159-179 (YTILSAAASSFLLFGMALVYA), 203-223 (LLAGFGMMIVGLGFKLSLVPF), 235-255 (PAPVSTFLATASKIAIFGVVM), 271-291 (VVLAIIAFASIIFGNLMALSQ), 297-317 (LLGYSSISHLGYLLVALIALQ), 326-346 (VGVYLAGYLFSSLGAFGVVSL), 373-393 (AAVMTVMMLSLAGIPMTLGFI), 408-430 (WWLVGAVVVGSAIGLYYYLRVAV), and 450-470 (YSAGGIVVLISALLVLVLGVW).

Belongs to the complex I subunit 2 family. As to quaternary structure, NDH-1 is composed of 13 different subunits. Subunits NuoA, H, J, K, L, M, N constitute the membrane sector of the complex.

It is found in the cell inner membrane. It carries out the reaction a quinone + NADH + 5 H(+)(in) = a quinol + NAD(+) + 4 H(+)(out). Functionally, NDH-1 shuttles electrons from NADH, via FMN and iron-sulfur (Fe-S) centers, to quinones in the respiratory chain. The immediate electron acceptor for the enzyme in this species is believed to be ubiquinone. Couples the redox reaction to proton translocation (for every two electrons transferred, four hydrogen ions are translocated across the cytoplasmic membrane), and thus conserves the redox energy in a proton gradient. The polypeptide is NADH-quinone oxidoreductase subunit N (Shigella boydii serotype 4 (strain Sb227)).